The primary structure comprises 406 residues: uncharacterized protein (406 aa).

This is an uncharacterized protein from Aquifex aeolicus (strain VF5).